Consider the following 449-residue polypeptide: Cortexillin-2 (449 aa).

Positions 1 to 231 (MTDLHKEWEK…ILYTSLFFHA (231 aa)) are actin-binding. 2 Calponin-homology (CH) domains span residues 10 to 119 (KVQE…RKYR) and 128 to 233 (KSSE…HAYR). Coiled coils occupy residues 232-364 (YRAK…AEGL) and 408-441 (QFEE…LKSA).

Belongs to the cortexillin family. Homodimer; parallel.

The protein resides in the cytoplasm. It is found in the cytoskeleton. Its function is as follows. Actin-bundling protein. When linked to F-actin the actin filaments form preferentially anti-parallel bundles that associate into meshworks. Plays a major role in cytokinesis. This chain is Cortexillin-2 (ctxB), found in Heterostelium pallidum (strain ATCC 26659 / Pp 5 / PN500) (Cellular slime mold).